A 165-amino-acid chain; its full sequence is Coronafacic acid dehydratase (165 aa).

Residue His62 is part of the active site.

This sequence belongs to the thioester dehydratase family.

It functions in the pathway phytotoxin biosynthesis; coronatine biosynthesis. In Pseudomonas savastanoi pv. glycinea (Pseudomonas syringae pv. glycinea), this protein is Coronafacic acid dehydratase (cfa2).